Reading from the N-terminus, the 591-residue chain is Aspartate--tRNA(Asp/Asn) ligase (591 aa).

L-aspartate is bound at residue E170. The segment at 194-197 (QLFK) is aspartate. R216 serves as a coordination point for L-aspartate. Residues 216 to 218 (RDE) and Q225 each bind ATP. Residue H448 coordinates L-aspartate. E482 contacts ATP. L-aspartate is bound at residue R489. Residue 534 to 537 (GWDR) participates in ATP binding. The segment at 559-591 (GGVDPLTDAPAPITEQQRKESGIDVKPEPSKPH) is disordered. Residues 574-591 (QQRKESGIDVKPEPSKPH) are compositionally biased toward basic and acidic residues.

The protein belongs to the class-II aminoacyl-tRNA synthetase family. Type 1 subfamily. In terms of assembly, homodimer.

Its subcellular location is the cytoplasm. The catalysed reaction is tRNA(Asx) + L-aspartate + ATP = L-aspartyl-tRNA(Asx) + AMP + diphosphate. Functionally, aspartyl-tRNA synthetase with relaxed tRNA specificity since it is able to aspartylate not only its cognate tRNA(Asp) but also tRNA(Asn). Reaction proceeds in two steps: L-aspartate is first activated by ATP to form Asp-AMP and then transferred to the acceptor end of tRNA(Asp/Asn). The protein is Aspartate--tRNA(Asp/Asn) ligase of Mycolicibacterium paratuberculosis (strain ATCC BAA-968 / K-10) (Mycobacterium paratuberculosis).